Here is a 1616-residue protein sequence, read N- to C-terminus: Putative inactive phenolphthiocerol synthesis polyketide synthase type I Pks1 (1616 aa).

Residues 83-397 are acyltransferase; it reads TVVVFPGQGA…GQVFTTGVPV (315 aa). S174 (for acyltransferase activity) is an active-site residue. The segment at 445-567 is N-terminal hotdog fold; it reads HALLGAVVER…GMLGVAAAET (123 aa). Residues 445 to 605 are dehydratase; the sequence is HALLGAVVER…YAYGPAFQGL (161 aa). Residues 445–719 form the PKS/mFAS DH domain; sequence HALLGAVVER…TRPITAEQLR (275 aa). H477 acts as the Proton acceptor; for dehydratase activity in catalysis. Positions 579-719 are C-terminal hotdog fold; the sequence is AESVDISDGY…TRPITAEQLR (141 aa). Catalysis depends on D640, which acts as the Proton donor; for dehydratase activity. The interval 910 to 1215 is enoylreductase; the sequence is GTLEDLVIQP…QARHIGKVVL (306 aa). Residues 1040-1057 and 1229-1244 contribute to the NADP(+) site; these read VLIHAGTGGVGMAAVQLA and TVVITGATGAVGGVLA. The interval 1228 to 1409 is beta-ketoacyl reductase; that stretch reads GTVVITGATG…SLAWGLWEQP (182 aa). The Carrier domain maps to 1514 to 1589; it reads ELLVGLVCLQ…AVAEYVAQQM (76 aa). S1549 is subject to O-(pantetheine 4'-phosphoryl)serine. The span at 1588 to 1604 shows a compositional bias: polar residues; it reads QMSGSRPTESGDPTSQV. Residues 1588 to 1616 form a disordered region; the sequence is QMSGSRPTESGDPTSQVVEPAAAEVSVHA.

It depends on pantetheine 4'-phosphate as a cofactor.

It functions in the pathway lipid metabolism; fatty acid biosynthesis. May play a role in phthiocerol biosynthesis. This chain is Putative inactive phenolphthiocerol synthesis polyketide synthase type I Pks1 (pks1), found in Mycobacterium tuberculosis (strain ATCC 25618 / H37Rv).